The following is a 67-amino-acid chain: Cold shock-like protein CspA (67 aa).

One can recognise a CSD domain in the interval 4-64 (GVVKWFNAEK…GPKGPQATKI (61 aa)).

It is found in the cytoplasm. This chain is Cold shock-like protein CspA (cspA), found in Bordetella bronchiseptica (strain ATCC BAA-588 / NCTC 13252 / RB50) (Alcaligenes bronchisepticus).